A 193-amino-acid chain; its full sequence is MPGSSLWLLPPKSHRLNSILPTLIDQTSSHFGSAHRFLPHVTITSEISPSTHSPNPQAWLDSLEISSGDKIEVMFEKLASEDVFFRKLYIKCHKTEGLKKLAVLCRREVEGFGEEREAAKWATESYNPHLSLLYHDCPSIDASGLAEIEKLAQSTGVNLNGQSDLGGWSGGRLVLVPTDKSIDQWSPIAEREL.

Catalysis depends on His-40, which acts as the Proton donor/acceptor. Substrate is bound at residue Thr-42. Catalysis depends on His-129, which acts as the Proton donor/acceptor. Residues Ser-131 and Tyr-134 each coordinate substrate.

This sequence belongs to the 2H phosphoesterase superfamily. CPD1 family.

The protein localises to the golgi apparatus. It carries out the reaction a nucleoside 2',3'-cyclic phosphate + H2O = a nucleoside 2'-phosphate + H(+). Involved in the metabolism of ADP-ribose 1',2'-cyclic phosphate which is produced as a consequence of tRNA splicing. This Phaeosphaeria nodorum (strain SN15 / ATCC MYA-4574 / FGSC 10173) (Glume blotch fungus) protein is 2',3'-cyclic-nucleotide 3'-phosphodiesterase (CPD1).